We begin with the raw amino-acid sequence, 368 residues long: 3-dehydroquinate synthase (368 aa).

NAD(+) contacts are provided by residues 69-74, 103-107, 127-128, Lys140, and Lys149; these read DGEAYK, GVIGD, and TT. Zn(2+) is bound by residues Glu182, His245, and His262.

It belongs to the sugar phosphate cyclases superfamily. Dehydroquinate synthase family. It depends on Co(2+) as a cofactor. Zn(2+) serves as cofactor. The cofactor is NAD(+).

The protein localises to the cytoplasm. The catalysed reaction is 7-phospho-2-dehydro-3-deoxy-D-arabino-heptonate = 3-dehydroquinate + phosphate. It participates in metabolic intermediate biosynthesis; chorismate biosynthesis; chorismate from D-erythrose 4-phosphate and phosphoenolpyruvate: step 2/7. In terms of biological role, catalyzes the conversion of 3-deoxy-D-arabino-heptulosonate 7-phosphate (DAHP) to dehydroquinate (DHQ). The sequence is that of 3-dehydroquinate synthase from Pseudomonas aeruginosa (strain UCBPP-PA14).